The following is a 291-amino-acid chain: Mitochondrial fission factor (291 aa).

At 1–271 the chain is on the cytoplasmic side; it reads MAEISRIQYE…ENKERAKREM (271 aa). Thr89 is subject to Phosphothreonine. The disordered stretch occupies residues 106 to 134; that stretch reads LERPLPTPQSEESRAVGRLKRERSMSENA. Residues Ser129, Ser131, and Ser146 each carry the phosphoserine modification. Position 149 is a phosphothreonine (Thr149). Phosphoserine is present on residues Ser151, Ser178, Ser182, and Ser244. A coiled-coil region spans residues 240–271; that stretch reads VDAASLRRQIIKLNRRLQLLEEENKERAKREM. A helical; Anchor for type IV membrane protein membrane pass occupies residues 272 to 289; sequence VMYSITVAFWLLNSWLWF. Residues 290–291 are Mitochondrial intermembrane-facing; it reads RR.

It belongs to the Tango11 family. Homodimer. Interacts with DNM1L. Interacts with C11orf65/MFI; the interaction inhibits MFF interaction with DNM1L.

The protein resides in the mitochondrion outer membrane. Its subcellular location is the peroxisome. It localises to the cytoplasmic vesicle. It is found in the secretory vesicle. The protein localises to the synaptic vesicle. Its function is as follows. Plays a role in mitochondrial and peroxisomal fission. Promotes the recruitment and association of the fission mediator dynamin-related protein 1 (DNM1L) to the mitochondrial surface. May be involved in regulation of synaptic vesicle membrane dynamics by recruitment of DNM1L to clathrin-containing vesicles. The chain is Mitochondrial fission factor (Mff) from Mus musculus (Mouse).